The following is a 317-amino-acid chain: Phospho-N-acetylmuramoyl-pentapeptide-transferase (317 aa).

Helical transmembrane passes span I6–P26, P52–G72, A78–L98, M114–T134, I145–A165, G171–S191, L194–L214, V223–L244, and K297–L317.

The protein belongs to the glycosyltransferase 4 family. MraY subfamily. The cofactor is Mg(2+).

Its subcellular location is the cell membrane. It carries out the reaction UDP-N-acetyl-alpha-D-muramoyl-L-alanyl-gamma-D-glutamyl-meso-2,6-diaminopimeloyl-D-alanyl-D-alanine + di-trans,octa-cis-undecaprenyl phosphate = di-trans,octa-cis-undecaprenyl diphospho-N-acetyl-alpha-D-muramoyl-L-alanyl-D-glutamyl-meso-2,6-diaminopimeloyl-D-alanyl-D-alanine + UMP. The protein operates within cell wall biogenesis; peptidoglycan biosynthesis. Functionally, catalyzes the initial step of the lipid cycle reactions in the biosynthesis of the cell wall peptidoglycan: transfers peptidoglycan precursor phospho-MurNAc-pentapeptide from UDP-MurNAc-pentapeptide onto the lipid carrier undecaprenyl phosphate, yielding undecaprenyl-pyrophosphoryl-MurNAc-pentapeptide, known as lipid I. The protein is Phospho-N-acetylmuramoyl-pentapeptide-transferase of Clostridium perfringens (strain 13 / Type A).